Consider the following 199-residue polypeptide: Charged multivesicular body protein 1b (199 aa).

Coiled-coil stretches lie at residues 10 to 48 and 178 to 199; these read NLKFAAKELNRNSKRCDKEEKAEKAKIKKAIQKGNMEVA and TSVASAEQDELSQRLARLRDQV. Residues 167-199 form a disordered region; that stretch reads ELPQGQTGSVGTSVASAEQDELSQRLARLRDQV. Residues 170 to 182 are compositionally biased toward polar residues; it reads QGQTGSVGTSVAS. An MIT-interacting motif motif is present at residues 186-196; the sequence is DELSQRLARLR.

The protein belongs to the SNF7 family. Probable peripherally associated component of the endosomal sorting required for transport complex III (ESCRT-III).

The protein resides in the cytoplasm. It localises to the cytosol. The protein localises to the endosome. Its subcellular location is the late endosome membrane. In terms of biological role, probable peripherally associated component of the endosomal sorting required for transport complex III (ESCRT-III) which is involved in multivesicular bodies (MVBs) formation and sorting of endosomal cargo proteins into MVBs. MVBs contain intraluminal vesicles (ILVs) that are generated by invagination and scission from the limiting membrane of the endosome and mostly are delivered to lysosomes enabling degradation of membrane proteins, such as stimulated growth factor receptors, lysosomal enzymes and lipids. In Gallus gallus (Chicken), this protein is Charged multivesicular body protein 1b (CHMP1B).